Consider the following 260-residue polypeptide: Hydroxyethylthiazole kinase (260 aa).

M49 is a binding site for substrate. Positions 124 and 170 each coordinate ATP. Substrate is bound at residue G197.

The protein belongs to the Thz kinase family. Requires Mg(2+) as cofactor.

It carries out the reaction 5-(2-hydroxyethyl)-4-methylthiazole + ATP = 4-methyl-5-(2-phosphooxyethyl)-thiazole + ADP + H(+). It participates in cofactor biosynthesis; thiamine diphosphate biosynthesis; 4-methyl-5-(2-phosphoethyl)-thiazole from 5-(2-hydroxyethyl)-4-methylthiazole: step 1/1. In terms of biological role, catalyzes the phosphorylation of the hydroxyl group of 4-methyl-5-beta-hydroxyethylthiazole (THZ). The protein is Hydroxyethylthiazole kinase of Yersinia enterocolitica serotype O:8 / biotype 1B (strain NCTC 13174 / 8081).